A 431-amino-acid polypeptide reads, in one-letter code: Tol-Pal system protein TolB (431 aa).

Positions 1–19 (MKRLLFFLICVFFSKTSYS) are cleaved as a signal peptide.

This sequence belongs to the TolB family. As to quaternary structure, the Tol-Pal system is composed of five core proteins: the inner membrane proteins TolA, TolQ and TolR, the periplasmic protein TolB and the outer membrane protein Pal. They form a network linking the inner and outer membranes and the peptidoglycan layer.

Its subcellular location is the periplasm. Functionally, part of the Tol-Pal system, which plays a role in outer membrane invagination during cell division and is important for maintaining outer membrane integrity. TolB occupies a key intermediary position in the Tol-Pal system because it communicates directly with both membrane-embedded components, Pal in the outer membrane and TolA in the inner membrane. The protein is Tol-Pal system protein TolB of Wigglesworthia glossinidia brevipalpis.